We begin with the raw amino-acid sequence, 410 residues long: Adenosine receptor A2a (410 aa).

Residues 1 to 4 (MGSS) lie on the Extracellular side of the membrane. A helical transmembrane segment spans residues 5-29 (VYIMVELAIAVLAILGNVLVCWAVW). The Cytoplasmic portion of the chain corresponds to 30-39 (INSNLQNVTN). A helical transmembrane segment spans residues 40–63 (FFVVSLAAADIAVGVLAIPFAITI). Topologically, residues 64-74 (STGFCAACHGC) are extracellular. Disulfide bonds link Cys-68-Cys-154, Cys-71-Cys-143, and Cys-74-Cys-161. The helical transmembrane segment at 75-97 (LFFACFVLVLTQSSIFSLLAIAI) threads the bilayer. At 98-117 (DRYIAIRIPLRYNGLVTGMR) the chain is on the cytoplasmic side. Residues 118 to 140 (AKGIIAICWVLSFAIGLTPMLGW) traverse the membrane as a helical segment. At 141 to 168 (NNCSQKDENSTKTCGEGRVTCLFEDVVP) the chain is on the extracellular side. 2 N-linked (GlcNAc...) asparagine glycosylation sites follow: Asn-142 and Asn-149. Residue Glu-164 participates in adenosine binding. The helical transmembrane segment at 169-193 (MNYMVYYNFFAFVLLPLLLMLAIYL) threads the bilayer. Topologically, residues 194-229 (RIFLAARRQLKQMESQPLPGERTRSTLQKEVHAAKS) are cytoplasmic. Residues 230-253 (LAIIVGLFALCWLPLHIINCFTFF) traverse the membrane as a helical segment. Asn-248 lines the adenosine pocket. Residues Cys-254 and Cys-257 are joined by a disulfide bond. Residues 254 to 261 (CSTCQHAP) lie on the Extracellular side of the membrane. The helical transmembrane segment at 262–285 (PWLMYLAIILSHSNSVVNPFIYAY) threads the bilayer. Positions 272 and 273 each coordinate adenosine. The Cytoplasmic segment spans residues 286–410 (RIREFRQTFR…ASWSSEFAPS (125 aa)). The interval 322 to 410 (HSTEGEQVSL…ASWSSEFAPS (89 aa)) is interaction with GAS2L2. The tract at residues 342 to 410 (ANGSAPHSGR…ASWSSEFAPS (69 aa)) is disordered. Positions 377–389 (TQEHQEGQEHPGL) are enriched in basic and acidic residues. Over residues 401–410 (ASWSSEFAPS) the composition is skewed to polar residues.

Belongs to the G-protein coupled receptor 1 family. Interacts (via cytoplasmic C-terminal domain) with USP4; the interaction is direct. May interact with DRD4. Interacts with NECAB2. Interacts (via cytoplasmic C-terminal domain) with GAS2L2; interaction enhances receptor-mediated adenylyl cyclase activity. Post-translationally, ubiquitinated. Deubiquitinated by USP4; leading to stabilization and expression at the cell surface.

Its subcellular location is the cell membrane. In terms of biological role, receptor for adenosine. The activity of this receptor is mediated by G proteins which activate adenylyl cyclase. The protein is Adenosine receptor A2a (Adora2a) of Mus musculus (Mouse).